A 566-amino-acid polypeptide reads, in one-letter code: Transcription factor tasR (566 aa).

A compositionally biased stretch (low complexity) spans M1–S30. A disordered region spans residues M1–I31. The zn(2)-C6 fungal-type DNA-binding region spans C35–C68. Disordered stretches follow at residues R72–H174, E346–D382, S422–A453, and R500–G551. Composition is skewed to low complexity over residues P89–A108 and S359–A378. Over residues G501–G532 the composition is skewed to gly residues.

The protein localises to the nucleus. Functionally, transcription factor that regulates the expression of the gene cluster that mediates the biosynthesis of the tetramic acids Sch210971 and Sch210972, potential anti-HIV fungal natural product that contain a decalin core. The polypeptide is Transcription factor tasR (Hapsidospora irregularis).